The primary structure comprises 144 residues: 3-hydroxyacyl-[acyl-carrier-protein] dehydratase FabZ (144 aa).

Residue histidine 48 is part of the active site.

This sequence belongs to the thioester dehydratase family. FabZ subfamily.

It is found in the cytoplasm. The catalysed reaction is a (3R)-hydroxyacyl-[ACP] = a (2E)-enoyl-[ACP] + H2O. Its function is as follows. Involved in unsaturated fatty acids biosynthesis. Catalyzes the dehydration of short chain beta-hydroxyacyl-ACPs and long chain saturated and unsaturated beta-hydroxyacyl-ACPs. The sequence is that of 3-hydroxyacyl-[acyl-carrier-protein] dehydratase FabZ from Bacillus pumilus (strain SAFR-032).